Consider the following 411-residue polypeptide: S-adenosylmethionine synthase (411 aa).

H15 is an ATP binding site. Residue D17 coordinates Mg(2+). E43 provides a ligand contact to K(+). L-methionine contacts are provided by E56 and Q99. A flexible loop region spans residues 99–109 (QSPDIAQGVDT). ATP is bound by residues 174–176 (DGK), 247–248 (RF), D256, 262–263 (RK), A279, and K283. An L-methionine-binding site is contributed by D256. Residue K287 participates in L-methionine binding.

This sequence belongs to the AdoMet synthase family. As to quaternary structure, homotetramer; dimer of dimers. Requires Mg(2+) as cofactor. It depends on K(+) as a cofactor.

The protein resides in the cytoplasm. It catalyses the reaction L-methionine + ATP + H2O = S-adenosyl-L-methionine + phosphate + diphosphate. Its pathway is amino-acid biosynthesis; S-adenosyl-L-methionine biosynthesis; S-adenosyl-L-methionine from L-methionine: step 1/1. Functionally, catalyzes the formation of S-adenosylmethionine (AdoMet) from methionine and ATP. The overall synthetic reaction is composed of two sequential steps, AdoMet formation and the subsequent tripolyphosphate hydrolysis which occurs prior to release of AdoMet from the enzyme. The sequence is that of S-adenosylmethionine synthase from Streptomyces spectabilis.